A 64-amino-acid chain; its full sequence is Neurotoxin lambda-MeuTx (64 aa).

The N-terminal stretch at 1–18 is a signal peptide; that stretch reads MSTFIVVFLLLTAILCHA. Residues 19–27 constitute a propeptide that is removed on maturation; the sequence is EHAIDETAR. Cystine bridges form between Cys29/Cys43, Cys36/Cys49, and Cys42/Cys58.

This sequence belongs to the scorpion calcin-like family. As to expression, expressed by the venom gland.

The protein localises to the secreted. Functionally, voltage-gated potassium channel (Kv) inhibitor. In addition it may increase intracellular calcium release through the activation of nuclear inositol 1,4,5-trisphosphate receptors (ITPR) of cardiomyocytes, thereby causing an increase in the contraction frequency of these cells. This chain is Neurotoxin lambda-MeuTx, found in Mesobuthus eupeus (Lesser Asian scorpion).